Consider the following 175-residue polypeptide: NADH-quinone oxidoreductase subunit I (175 aa).

4Fe-4S ferredoxin-type domains lie at 44–74 and 90–119; these read LNRYADGLEKCIGCELCAWACPADAIFVEGA and RVYQINYLRCIGCGLCIEACPTRALTMTND. Cys-54, Cys-57, Cys-60, Cys-64, Cys-99, Cys-102, Cys-105, and Cys-109 together coordinate [4Fe-4S] cluster. The tract at residues 148-175 is disordered; the sequence is PPHAMAPGATDEDYYRGTVSPSAEADAR.

The protein belongs to the complex I 23 kDa subunit family. In terms of assembly, NDH-1 is composed of 14 different subunits. Subunits NuoA, H, J, K, L, M, N constitute the membrane sector of the complex. It depends on [4Fe-4S] cluster as a cofactor.

The protein localises to the cell membrane. The catalysed reaction is a quinone + NADH + 5 H(+)(in) = a quinol + NAD(+) + 4 H(+)(out). Functionally, NDH-1 shuttles electrons from NADH, via FMN and iron-sulfur (Fe-S) centers, to quinones in the respiratory chain. The immediate electron acceptor for the enzyme in this species is believed to be menaquinone. Couples the redox reaction to proton translocation (for every two electrons transferred, four hydrogen ions are translocated across the cytoplasmic membrane), and thus conserves the redox energy in a proton gradient. The chain is NADH-quinone oxidoreductase subunit I from Mycolicibacterium gilvum (strain PYR-GCK) (Mycobacterium gilvum (strain PYR-GCK)).